The following is a 326-amino-acid chain: Delta-aminolevulinic acid dehydratase (326 aa).

Cys-125, Cys-127, and Cys-135 together coordinate Zn(2+). The Schiff-base intermediate with substrate role is filled by Lys-200. Positions 210 and 222 each coordinate 5-aminolevulinate. A Mg(2+)-binding site is contributed by Glu-238. Lys-253 (schiff-base intermediate with substrate) is an active-site residue. Ser-279 lines the 5-aminolevulinate pocket.

Belongs to the ALAD family. In terms of assembly, homooctamer. It depends on Zn(2+) as a cofactor.

The catalysed reaction is 2 5-aminolevulinate = porphobilinogen + 2 H2O + H(+). The protein operates within porphyrin-containing compound metabolism; protoporphyrin-IX biosynthesis; coproporphyrinogen-III from 5-aminolevulinate: step 1/4. Its function is as follows. Catalyzes an early step in the biosynthesis of tetrapyrroles. Binds two molecules of 5-aminolevulinate per subunit, each at a distinct site, and catalyzes their condensation to form porphobilinogen. This chain is Delta-aminolevulinic acid dehydratase (hemB), found in Methanothermobacter thermautotrophicus (strain ATCC 29096 / DSM 1053 / JCM 10044 / NBRC 100330 / Delta H) (Methanobacterium thermoautotrophicum).